A 376-amino-acid polypeptide reads, in one-letter code: Heterodimeric geranylgeranyl pyrophosphate synthase large subunit 2 (376 aa).

The signal sequence occupies residues 1–24 (MEPQILFLYLSLFILSLNFFFTNL). 3 residues coordinate isopentenyl diphosphate: lysine 125, arginine 128, and histidine 157. Residues aspartate 164 and aspartate 170 each contribute to the Mg(2+) site. Residue arginine 175 participates in dimethylallyl diphosphate binding. Arginine 176 provides a ligand contact to isopentenyl diphosphate. Residues lysine 261, threonine 262, glutamine 299, lysine 316, and lysine 326 each coordinate dimethylallyl diphosphate.

The protein belongs to the FPP/GGPP synthase family. In terms of assembly, monomer. Part of a heterodimeric geranyl(geranyl)diphosphate synthase. Interacts with GGR. Mg(2+) serves as cofactor. As to expression, mainly expressed in flowers.

The protein resides in the endoplasmic reticulum. The catalysed reaction is isopentenyl diphosphate + dimethylallyl diphosphate = (2E)-geranyl diphosphate + diphosphate. The enzyme catalyses isopentenyl diphosphate + (2E)-geranyl diphosphate = (2E,6E)-farnesyl diphosphate + diphosphate. It carries out the reaction isopentenyl diphosphate + (2E,6E)-farnesyl diphosphate = (2E,6E,10E)-geranylgeranyl diphosphate + diphosphate. Its pathway is isoprenoid biosynthesis; farnesyl diphosphate biosynthesis; farnesyl diphosphate from geranyl diphosphate and isopentenyl diphosphate: step 1/1. It functions in the pathway isoprenoid biosynthesis; geranyl diphosphate biosynthesis; geranyl diphosphate from dimethylallyl diphosphate and isopentenyl diphosphate: step 1/1. It participates in isoprenoid biosynthesis; geranylgeranyl diphosphate biosynthesis; geranylgeranyl diphosphate from farnesyl diphosphate and isopentenyl diphosphate: step 1/1. In terms of biological role, heterodimeric geranyl(geranyl)-diphosphate (GPP) synthase large subunit. In vitro, the large subunit catalyzes mainly the trans-addition of the three molecules of IPP onto DMAPP to form geranylgeranyl pyrophosphate while the small subunit alone is inactive. Upon association of the two subunits, the product profile is not changed. This Arabidopsis thaliana (Mouse-ear cress) protein is Heterodimeric geranylgeranyl pyrophosphate synthase large subunit 2 (GGPPS2).